Consider the following 266-residue polypeptide: Tryptophan synthase alpha chain (266 aa).

Active-site proton acceptor residues include Glu45 and Asp56.

The protein belongs to the TrpA family. Tetramer of two alpha and two beta chains.

It carries out the reaction (1S,2R)-1-C-(indol-3-yl)glycerol 3-phosphate + L-serine = D-glyceraldehyde 3-phosphate + L-tryptophan + H2O. It participates in amino-acid biosynthesis; L-tryptophan biosynthesis; L-tryptophan from chorismate: step 5/5. Functionally, the alpha subunit is responsible for the aldol cleavage of indoleglycerol phosphate to indole and glyceraldehyde 3-phosphate. In Novosphingobium aromaticivorans (strain ATCC 700278 / DSM 12444 / CCUG 56034 / CIP 105152 / NBRC 16084 / F199), this protein is Tryptophan synthase alpha chain.